Consider the following 314-residue polypeptide: 2-dehydro-3-deoxygluconokinase (314 aa).

Residues 28–32, Tyr88, 102–104, and Arg170 contribute to the substrate site; these read GDTLN and YWR. Residues 168 to 170, 228 to 233, and 260 to 263 each bind ATP; these read NYR, KCGKNG, and SAGD. Substrate is bound at residue Asp263. Catalysis depends on Asp263, which acts as the Proton acceptor.

It belongs to the carbohydrate kinase PfkB family.

The enzyme catalyses 2-dehydro-3-deoxy-D-gluconate + ATP = 2-dehydro-3-deoxy-6-phospho-D-gluconate + ADP + H(+). It participates in carbohydrate acid metabolism; 2-dehydro-3-deoxy-D-gluconate degradation; D-glyceraldehyde 3-phosphate and pyruvate from 2-dehydro-3-deoxy-D-gluconate: step 1/2. In terms of biological role, catalyzes the phosphorylation of 2-keto-3-deoxygluconate (KDG) to produce 2-keto-3-deoxy-6-phosphogluconate (KDPG). In Haemophilus influenzae (strain ATCC 51907 / DSM 11121 / KW20 / Rd), this protein is 2-dehydro-3-deoxygluconokinase (kdgK).